An 831-amino-acid polypeptide reads, in one-letter code: Periplasmic nitrate reductase (831 aa).

Residues 1-29 (MTLSRRDFIKQTAVAATASVAGVTLPAGA) constitute a signal peptide (tat-type signal). The region spanning 41–97 (LKWSKAPCRFCGTGCGVTVAVRDNKVVATNGDPQAEVNKGLNCVKGYFLSKIMYGQD) is the 4Fe-4S Mo/W bis-MGD-type domain. Cys-48, Cys-51, Cys-55, and Cys-83 together coordinate [4Fe-4S] cluster. Mo-bis(molybdopterin guanine dinucleotide) contacts are provided by residues Lys-85, Gln-152, Asn-177, Cys-181, 214 to 221 (WGSNMAEM), 245 to 249 (STFTH), 264 to 266 (QTD), Met-375, Gln-379, Asn-485, 511 to 512 (SD), Lys-534, Asp-561, and 721 to 730 (TGRVLEHWHS). Position 797 (Trp-797) interacts with substrate. Asn-805 and Lys-822 together coordinate Mo-bis(molybdopterin guanine dinucleotide).

This sequence belongs to the prokaryotic molybdopterin-containing oxidoreductase family. NasA/NapA/NarB subfamily. As to quaternary structure, component of the periplasmic nitrate reductase NapAB complex composed of NapA and NapB. The cofactor is [4Fe-4S] cluster. Mo-bis(molybdopterin guanine dinucleotide) is required as a cofactor. Predicted to be exported by the Tat system. The position of the signal peptide cleavage has not been experimentally proven.

It localises to the periplasm. It carries out the reaction 2 Fe(II)-[cytochrome] + nitrate + 2 H(+) = 2 Fe(III)-[cytochrome] + nitrite + H2O. Its function is as follows. Catalytic subunit of the periplasmic nitrate reductase complex NapAB. Receives electrons from NapB and catalyzes the reduction of nitrate to nitrite. This chain is Periplasmic nitrate reductase, found in Cupriavidus taiwanensis (strain DSM 17343 / BCRC 17206 / CCUG 44338 / CIP 107171 / LMG 19424 / R1) (Ralstonia taiwanensis (strain LMG 19424)).